The primary structure comprises 733 residues: MPLAQLVNLWPEVAVVHEDPENGHGSPEEGGRHTSKDEVVVKEFPITHHVKEGSEKADQSDFVLLKVLGQGSFGKVFLVRKITPPDANQLYAMKVLKKATLKVRDRVRTKMERDILADVHHPFVVRLHYAFQTEGKLYLILDFLRGGDLFTRLSKEVMFTEEDVKFYLAELALGLDHLHSLGIIYRDLKPENILLDEEGHIKLTDFGLSKEAIDHEKKAYSFCGTVEYMAPEVVNRQGHSHSADWWSYGVLMFEMLTGSLPFQGKDRKETMTLILKAKLGMPQFLSNEAQSLLRALFKRNPTNRLGSAMEGAEEIKRQPFFSTIDWNKLFRREMSPPFKPAVTQADDTYYFDTEFTSRTPKDSPGIPPSAGAHQLFRGFSFVAPALVEEDAKKTSSPPVLSVPKTHSKNILFMDVYTVRETIGVGSYSVCKRCVHKGTNMEYAVKVIDKTKRDPSEEIEILRRYGQHPNIIALKDVYKEGNSIYVVTELMRGGELLDRILRQKFFSEREASSVLFTVCKTVENLHSQGVVHRDLKPSNILYVDESGDPESIRICDFGFAKQLRADNGLLMTPCYTANFVAPEVLKRQGYDEGCDIWSLGILLYTMLAGYTPFANGLGDTPEEILARIGSGKFTLRGGNWNTVSAAAKDLVSRMLHVDPHKRLTAKQVLQHEWITKRDALPQSQLNRQDVHLVKGAMAATYSALNSSKPTPLLQPIKSSILAQRRVKKLPSTTL.

Positions 18–38 (EDPENGHGSPEEGGRHTSKDE) are disordered. One can recognise a Protein kinase 1 domain in the interval 62 to 321 (FVLLKVLGQG…AEEIKRQPFF (260 aa)). Residues 68 to 76 (LGQGSFGKV) and Lys94 contribute to the ATP site. Residue Asp187 is the Proton acceptor of the active site. A Phosphoserine modification is found at Ser221. The AGC-kinase C-terminal domain maps to 322-391 (STIDWNKLFR…VAPALVEEDA (70 aa)). The residue at position 359 (Thr359) is a Phosphothreonine. Residue Ser363 is modified to Phosphoserine. Ser380 carries the phosphoserine; by autocatalysis modification. The Protein kinase 2 domain maps to 416–673 (YTVRETIGVG…AKQVLQHEWI (258 aa)). Residues 422 to 430 (IGVGSYSVC) and Lys445 contribute to the ATP site. Asp533 acts as the Proton acceptor in catalysis. Residue Thr571 is modified to Phosphothreonine. Ser730 carries the post-translational modification Phosphoserine.

It belongs to the protein kinase superfamily. AGC Ser/Thr protein kinase family. S6 kinase subfamily. Mg(2+) is required as a cofactor. Post-translationally, autophosphorylated on Ser-380, as part of the activation process.

It catalyses the reaction L-seryl-[protein] + ATP = O-phospho-L-seryl-[protein] + ADP + H(+). It carries out the reaction L-threonyl-[protein] + ATP = O-phospho-L-threonyl-[protein] + ADP + H(+). Its activity is regulated as follows. Activated by multiple phosphorylations on threonine and serine residues. In terms of biological role, serine/threonine kinase that may play a role in mediating the growth-factor and stress induced activation of transcription. The protein is Ribosomal protein S6 kinase 2 alpha (rps6ka) of Xenopus laevis (African clawed frog).